The primary structure comprises 335 residues: Glycerol-3-phosphate dehydrogenase [NAD(P)+] (335 aa).

Serine 12, tryptophan 13, and lysine 107 together coordinate NADPH. Residues lysine 107, glycine 138, and serine 140 each coordinate sn-glycerol 3-phosphate. Alanine 142 lines the NADPH pocket. Lysine 193, aspartate 246, serine 256, arginine 257, and asparagine 258 together coordinate sn-glycerol 3-phosphate. Catalysis depends on lysine 193, which acts as the Proton acceptor. Position 257 (arginine 257) interacts with NADPH. Residues valine 281 and glutamate 283 each contribute to the NADPH site.

The protein belongs to the NAD-dependent glycerol-3-phosphate dehydrogenase family.

It localises to the cytoplasm. It carries out the reaction sn-glycerol 3-phosphate + NAD(+) = dihydroxyacetone phosphate + NADH + H(+). It catalyses the reaction sn-glycerol 3-phosphate + NADP(+) = dihydroxyacetone phosphate + NADPH + H(+). It functions in the pathway membrane lipid metabolism; glycerophospholipid metabolism. Catalyzes the reduction of the glycolytic intermediate dihydroxyacetone phosphate (DHAP) to sn-glycerol 3-phosphate (G3P), the key precursor for phospholipid synthesis. The polypeptide is Glycerol-3-phosphate dehydrogenase [NAD(P)+] (Geobacter metallireducens (strain ATCC 53774 / DSM 7210 / GS-15)).